The sequence spans 365 residues: Annexin B22 (365 aa).

4 Annexin repeats span residues 34 to 105 (FSAS…QLIV), 106 to 185 (DTPY…SLVQ), 211 to 283 (ELAE…AVLR), and 287 to 358 (DRPS…VLMG). 20 residues coordinate Ca(2+): Met47, Gly49, Gly51, Thr52, Glu54, Asp91, Met119, Gly121, Gly123, Asp126, Lys169, Glu171, Thr172, Glu177, Asp273, Met300, Gly302, Leu303, Gly304, and Asp344.

This sequence belongs to the annexin family. As to quaternary structure, homodimer.

The protein resides in the tegument. It localises to the secreted. The protein localises to the extracellular exosome. Its subcellular location is the host cell. Involved in reproduction of the worm. Involved in host-parasite interaction. Delivered into the host cell by means of parasite exosomes. Binds to acidic phospholipid membranes in a calcium-dependent manner in vitro. Causes aggregation of liposomes in the presence of calcium, but not in its absence. Likely to promote membrane fusion. May provide structural integrity within the tegument. The chain is Annexin B22 from Schistosoma mansoni (Blood fluke).